The chain runs to 513 residues: Coiled-coil domain-containing protein 102B (513 aa).

Residues 1-217 (MNLDSIHRLI…IDSLKLSEEM (217 aa)) form a required for centriolar localization and for interaction with CEP250, CROCC, LRRC45 and NEK2 region. Phosphoserine occurs at positions 21, 22, 34, 135, 142, 194, and 210. Residues 72–142 (ELRLRELEEV…ELSTLKKKQS (71 aa)) are a coiled coil. 2 coiled-coil regions span residues 268-337 (QKIL…ESKS) and 363-513 (WDKR…LQNW). S401, S404, and S406 each carry phosphoserine. The segment at 493-513 (LDEEKERNENLETELRHLQNW) is disordered.

As to quaternary structure, interacts (via N-terminus) with centriolar protein CEP250/CNAP1; the interaction results in recruitment of CCDC102B to the proximal ends of centrioles. Interacts (via N-terminus) with CROCC/rootletin and LRRC45. Interacts (via N-terminus) with serine/threonine-protein kinase NEK2; the interaction results in phosphorylation of CCDC102B. Post-translationally, phosphorylated directly or indirectly by NEK2 during mitosis which causes dissociation of CCDC102B from the centrosome and allows for centrosome separation.

The protein resides in the cytoplasm. It is found in the cytoskeleton. It localises to the microtubule organizing center. The protein localises to the centrosome. Its subcellular location is the centriole. Its function is as follows. During interphase, forms fibers at the proximal ends of centrioles to maintain centrosome cohesion. During mitosis, dissociates from the centrosome following phosphorylation to allow centrosome separation. Contributes to CROCC/rootletin filament formation. The sequence is that of Coiled-coil domain-containing protein 102B (CCDC102B) from Homo sapiens (Human).